The following is a 391-amino-acid chain: Putative gustatory receptor 36a (391 aa).

The Cytoplasmic segment spans residues 1-3 (MFD). Residues 4–24 (WVGLLLKVLYYYGQIIGLINF) traverse the membrane as a helical segment. Residues 25–38 (EIDWQRGRVVAAQR) are Extracellular-facing. Residues 39–59 (GILFAIAINVLICMVLLLQIS) traverse the membrane as a helical segment. At 60–73 (KKFNLDVYFGRANQ) the chain is on the cytoplasmic side. A helical membrane pass occupies residues 74–94 (LHQYVIIVMVSLRMASGISAI). Over 95–126 (LNRWRQRAQLMRLVECVLRLFLKKPHVKQMSR) the chain is Extracellular. A helical membrane pass occupies residues 127-147 (WAILVKFSVGVVSNFLQMAIS). The Cytoplasmic segment spans residues 148–165 (MESLDRLGFNEFVGMASD). A helical transmembrane segment spans residues 166-186 (FWMSAIINMAISQHYLVILFV). Topologically, residues 187–247 (RAYYHLLKTE…LQSIVTQLNQ (61 aa)) are extracellular. A helical membrane pass occupies residues 248–268 (VFGIQGIMVYGGYYIFSVATT). At 269–290 (YITYSLAINGIEELHLSVRAAA) the chain is on the cytoplasmic side. A helical transmembrane segment spans residues 291–311 (LVFSWFLFYYTSAILNLFVML). Residues 312-391 (KLFDDHKEME…FLIQYDMEYF (80 aa)) are Extracellular-facing.

The protein belongs to the insect chemoreceptor superfamily. Gustatory receptor (GR) family. Gr22e subfamily.

It localises to the cell membrane. Probable gustatory receptor which mediates acceptance or avoidance behavior, depending on its substrates. The protein is Putative gustatory receptor 36a (Gr36a) of Drosophila melanogaster (Fruit fly).